The sequence spans 270 residues: Phosphatidylglycerol--prolipoprotein diacylglyceryl transferase (270 aa).

A run of 7 helical transmembrane segments spans residues 10 to 30 (VAVA…LVGI), 56 to 76 (LIFW…VLFY), 92 to 112 (WKGG…AWWF), 120 to 140 (FFQL…AGRI), 175 to 195 (SQLY…NLYA), 202 to 222 (MAVS…VEFV), and 237 to 257 (VTMG…LIWL). Arginine 139 is an a 1,2-diacyl-sn-glycero-3-phospho-(1'-sn-glycerol) binding site.

The protein belongs to the Lgt family.

The protein resides in the cell inner membrane. The catalysed reaction is L-cysteinyl-[prolipoprotein] + a 1,2-diacyl-sn-glycero-3-phospho-(1'-sn-glycerol) = an S-1,2-diacyl-sn-glyceryl-L-cysteinyl-[prolipoprotein] + sn-glycerol 1-phosphate + H(+). It participates in protein modification; lipoprotein biosynthesis (diacylglyceryl transfer). Catalyzes the transfer of the diacylglyceryl group from phosphatidylglycerol to the sulfhydryl group of the N-terminal cysteine of a prolipoprotein, the first step in the formation of mature lipoproteins. This chain is Phosphatidylglycerol--prolipoprotein diacylglyceryl transferase, found in Pseudomonas syringae pv. syringae (strain B728a).